The following is a 354-amino-acid chain: Hyaluronan and proteoglycan link protein 1 (354 aa).

A propeptide spanning residues 1–15 (MKSLLLLVLISICGA) is cleaved from the precursor. Residues N21 and N56 are each glycosylated (N-linked (GlcNAc...) asparagine). The Ig-like V-type domain occupies 38-152 (PRLLVEAEQA…EGLEDDTAVV (115 aa)). Intrachain disulfides connect C61–C139, C181–C252, C205–C226, C279–C349, and C304–C325. 2 consecutive Link domains span residues 159–254 (VVFP…FCFT) and 259–351 (GRFY…YCFR).

Belongs to the HAPLN family.

It is found in the secreted. It localises to the extracellular space. The protein localises to the extracellular matrix. In terms of biological role, stabilizes the aggregates of proteoglycan monomers with hyaluronic acid in the extracellular cartilage matrix. This chain is Hyaluronan and proteoglycan link protein 1 (HAPLN1), found in Equus caballus (Horse).